Reading from the N-terminus, the 256-residue chain is uncharacterized protein (256 aa).

The protein belongs to the methyltransferase superfamily.

Its subcellular location is the cytoplasm. It is found in the nucleus. In terms of biological role, probable methyltransferase. This is an uncharacterized protein from Schizosaccharomyces pombe (strain 972 / ATCC 24843) (Fission yeast).